We begin with the raw amino-acid sequence, 274 residues long: 2,3,4,5-tetrahydropyridine-2,6-dicarboxylate N-succinyltransferase (274 aa).

The protein belongs to the transferase hexapeptide repeat family.

Its subcellular location is the cytoplasm. It catalyses the reaction (S)-2,3,4,5-tetrahydrodipicolinate + succinyl-CoA + H2O = (S)-2-succinylamino-6-oxoheptanedioate + CoA. Its pathway is amino-acid biosynthesis; L-lysine biosynthesis via DAP pathway; LL-2,6-diaminopimelate from (S)-tetrahydrodipicolinate (succinylase route): step 1/3. The polypeptide is 2,3,4,5-tetrahydropyridine-2,6-dicarboxylate N-succinyltransferase (Klebsiella pneumoniae (strain 342)).